The primary structure comprises 170 residues: CDP-archaeol synthase (170 aa).

A run of 5 helical transmembrane segments spans residues alanine 9 to glycine 29, glycine 53 to proline 73, leucine 79 to isoleucine 99, proline 114 to valine 134, and glycine 140 to alanine 160.

It belongs to the CDP-archaeol synthase family. Mg(2+) is required as a cofactor.

It localises to the cell membrane. It carries out the reaction 2,3-bis-O-(geranylgeranyl)-sn-glycerol 1-phosphate + CTP + H(+) = CDP-2,3-bis-O-(geranylgeranyl)-sn-glycerol + diphosphate. It functions in the pathway membrane lipid metabolism; glycerophospholipid metabolism. Its function is as follows. Catalyzes the formation of CDP-2,3-bis-(O-geranylgeranyl)-sn-glycerol (CDP-archaeol) from 2,3-bis-(O-geranylgeranyl)-sn-glycerol 1-phosphate (DGGGP) and CTP. This reaction is the third ether-bond-formation step in the biosynthesis of archaeal membrane lipids. In Pyrococcus horikoshii (strain ATCC 700860 / DSM 12428 / JCM 9974 / NBRC 100139 / OT-3), this protein is CDP-archaeol synthase.